The primary structure comprises 281 residues: Bis(5'-nucleosyl)-tetraphosphatase, symmetrical (281 aa).

The protein belongs to the Ap4A hydrolase family.

It catalyses the reaction P(1),P(4)-bis(5'-adenosyl) tetraphosphate + H2O = 2 ADP + 2 H(+). Functionally, hydrolyzes diadenosine 5',5'''-P1,P4-tetraphosphate to yield ADP. This is Bis(5'-nucleosyl)-tetraphosphatase, symmetrical from Pectobacterium atrosepticum (strain SCRI 1043 / ATCC BAA-672) (Erwinia carotovora subsp. atroseptica).